We begin with the raw amino-acid sequence, 527 residues long: Glutamate--cysteine ligase (527 aa).

The protein belongs to the glutamate--cysteine ligase type 1 family. Type 1 subfamily.

The catalysed reaction is L-cysteine + L-glutamate + ATP = gamma-L-glutamyl-L-cysteine + ADP + phosphate + H(+). It functions in the pathway sulfur metabolism; glutathione biosynthesis; glutathione from L-cysteine and L-glutamate: step 1/2. The chain is Glutamate--cysteine ligase from Pseudomonas aeruginosa (strain LESB58).